The primary structure comprises 317 residues: 4-hydroxy-3-methylbut-2-enyl diphosphate reductase (317 aa).

Position 12 (Cys12) interacts with [4Fe-4S] cluster. Residues His41 and His74 each coordinate (2E)-4-hydroxy-3-methylbut-2-enyl diphosphate. The dimethylallyl diphosphate site is built by His41 and His74. Isopentenyl diphosphate is bound by residues His41 and His74. A [4Fe-4S] cluster-binding site is contributed by Cys97. His125 contributes to the (2E)-4-hydroxy-3-methylbut-2-enyl diphosphate binding site. A dimethylallyl diphosphate-binding site is contributed by His125. Isopentenyl diphosphate is bound at residue His125. Catalysis depends on Glu127, which acts as the Proton donor. Thr168 contacts (2E)-4-hydroxy-3-methylbut-2-enyl diphosphate. Residue Cys198 coordinates [4Fe-4S] cluster. The (2E)-4-hydroxy-3-methylbut-2-enyl diphosphate site is built by Ser226, Ser227, Asn228, and Ser270. Dimethylallyl diphosphate contacts are provided by Ser226, Ser227, Asn228, and Ser270. 4 residues coordinate isopentenyl diphosphate: Ser226, Ser227, Asn228, and Ser270.

This sequence belongs to the IspH family. As to quaternary structure, homodimer. The cofactor is [4Fe-4S] cluster.

The catalysed reaction is isopentenyl diphosphate + 2 oxidized [2Fe-2S]-[ferredoxin] + H2O = (2E)-4-hydroxy-3-methylbut-2-enyl diphosphate + 2 reduced [2Fe-2S]-[ferredoxin] + 2 H(+). The enzyme catalyses dimethylallyl diphosphate + 2 oxidized [2Fe-2S]-[ferredoxin] + H2O = (2E)-4-hydroxy-3-methylbut-2-enyl diphosphate + 2 reduced [2Fe-2S]-[ferredoxin] + 2 H(+). It participates in isoprenoid biosynthesis; dimethylallyl diphosphate biosynthesis; dimethylallyl diphosphate from (2E)-4-hydroxy-3-methylbutenyl diphosphate: step 1/1. The protein operates within isoprenoid biosynthesis; isopentenyl diphosphate biosynthesis via DXP pathway; isopentenyl diphosphate from 1-deoxy-D-xylulose 5-phosphate: step 6/6. Its function is as follows. Catalyzes the conversion of 1-hydroxy-2-methyl-2-(E)-butenyl 4-diphosphate (HMBPP) into a mixture of isopentenyl diphosphate (IPP) and dimethylallyl diphosphate (DMAPP). Acts in the terminal step of the DOXP/MEP pathway for isoprenoid precursor biosynthesis. The protein is 4-hydroxy-3-methylbut-2-enyl diphosphate reductase of Yersinia enterocolitica serotype O:8 / biotype 1B (strain NCTC 13174 / 8081).